Here is a 325-residue protein sequence, read N- to C-terminus: Germination protease (325 aa).

The propeptide occupies 1-7 (MYNVRTD).

Belongs to the peptidase A25 family. As to quaternary structure, homotetramer. In terms of processing, autoproteolytically processed. The inactive tetrameric zymogen termed p46 autoprocesses to a smaller form termed p41, which is active only during spore germination.

The catalysed reaction is Endopeptidase action with P4 Glu or Asp, P1 preferably Glu &gt; Asp, P1' hydrophobic and P2' Ala.. Its function is as follows. Initiates the rapid degradation of small, acid-soluble proteins during spore germination. This Clostridium perfringens (strain SM101 / Type A) protein is Germination protease.